A 502-amino-acid polypeptide reads, in one-letter code: Maturase K (502 aa).

This sequence belongs to the intron maturase 2 family. MatK subfamily.

The protein resides in the plastid. Its subcellular location is the chloroplast. Functionally, usually encoded in the trnK tRNA gene intron. Probably assists in splicing its own and other chloroplast group II introns. The polypeptide is Maturase K (Ipomoea purpurea (Common morning glory)).